The primary structure comprises 234 residues: uncharacterized protein (234 aa).

This is an uncharacterized protein from Escherichia coli (strain K12).